Reading from the N-terminus, the 193-residue chain is Sarcoplasmic calcium-binding protein (193 aa).

3 consecutive EF-hand domains span residues 16–40 (MYDIDNNGYLDKNDFECLALRNTLI), 57–92 (IMSNLWNEIAELADFNKDGQVTVDEFKQAVQNLCCG), and 101–136 (CFKTVIGRLFKTIDINGDGLAGVDEYRLDCISRSAF). Ca(2+) is bound by residues D18, D20, N22, Y24, D29, D70, N72, D74, Q76, E81, D114, N116, D118, and E125.

As to quaternary structure, monomer and dimer. In terms of tissue distribution, skeletal muscle (at protein level).

Like parvalbumins, SCPs seem to be more abundant in fast contracting muscles, but no functional relationship can be established from this distribution. This chain is Sarcoplasmic calcium-binding protein, found in Scylla paramamosain (Mud crab).